The primary structure comprises 220 residues: UPF0319 protein Ent638_1476 (220 aa).

Residues 1–20 (MKTGIVSAVLALVMPVCVYA) form the signal peptide.

Belongs to the UPF0319 family.

This is UPF0319 protein Ent638_1476 from Enterobacter sp. (strain 638).